A 411-amino-acid chain; its full sequence is Na(+)-translocating NADH-quinone reductase subunit F (411 aa).

A helical membrane pass occupies residues 5–25 (VILALGIAAFTVIVLVLVAII). Residues 36-130 (GDITIGINDD…NMEVELPEEI (95 aa)) form the 2Fe-2S ferredoxin-type domain. Cys-73, Cys-79, Cys-82, and Cys-114 together coordinate [2Fe-2S] cluster. The 141-residue stretch at 133-273 (VKKWECTVIS…SGPFGEFFAK (141 aa)) folds into the FAD-binding FR-type domain.

Belongs to the NqrF family. In terms of assembly, composed of six subunits; NqrA, NqrB, NqrC, NqrD, NqrE and NqrF. The cofactor is [2Fe-2S] cluster. It depends on FAD as a cofactor.

The protein resides in the cell inner membrane. It catalyses the reaction a ubiquinone + n Na(+)(in) + NADH + H(+) = a ubiquinol + n Na(+)(out) + NAD(+). Its function is as follows. NQR complex catalyzes the reduction of ubiquinone-1 to ubiquinol by two successive reactions, coupled with the transport of Na(+) ions from the cytoplasm to the periplasm. The first step is catalyzed by NqrF, which accepts electrons from NADH and reduces ubiquinone-1 to ubisemiquinone by a one-electron transfer pathway. The polypeptide is Na(+)-translocating NADH-quinone reductase subunit F (Haemophilus influenzae (strain PittEE)).